A 292-amino-acid polypeptide reads, in one-letter code: Probable septum site-determining protein MinC (292 aa).

The segment at 109 to 188 (QVIDTAPPND…PQSSSALVIT (80 aa)) is disordered. Acidic residues predominate over residues 140-150 (QDDEADGEQAD). Polar residues predominate over residues 171–185 (ANRPTATPPQSSSAL).

Belongs to the MinC family. In terms of assembly, interacts with MinD and FtsZ.

In terms of biological role, cell division inhibitor that blocks the formation of polar Z ring septums. Rapidly oscillates between the poles of the cell to destabilize FtsZ filaments that have formed before they mature into polar Z rings. Prevents FtsZ polymerization. This chain is Probable septum site-determining protein MinC, found in Bordetella pertussis (strain Tohama I / ATCC BAA-589 / NCTC 13251).